The chain runs to 740 residues: Catalase-peroxidase (740 aa).

The segment at 1–44 is disordered; sequence MSDSCPVAHDGNTASTSESENPAIPSPTPTGNRPRTNRDWWPNQ. The tryptophyl-tyrosyl-methioninium (Trp-Tyr) (with M-257) cross-link spans 109 to 231; that stretch reads WHAAGTYRIA…LGAVQMGLIY (123 aa). The Proton acceptor role is filled by H110. Positions 231–257 form a cross-link, tryptophyl-tyrosyl-methioninium (Tyr-Met) (with W-109); the sequence is YVNPEGPNGQPDPVAAARDIRETFARM. H272 is a binding site for heme b.

Belongs to the peroxidase family. Peroxidase/catalase subfamily. In terms of assembly, homodimer or homotetramer. Requires heme b as cofactor. Formation of the three residue Trp-Tyr-Met cross-link is important for the catalase, but not the peroxidase activity of the enzyme.

The enzyme catalyses H2O2 + AH2 = A + 2 H2O. It carries out the reaction 2 H2O2 = O2 + 2 H2O. In terms of biological role, bifunctional enzyme with both catalase and broad-spectrum peroxidase activity. The polypeptide is Catalase-peroxidase (Rhodococcus erythropolis (strain PR4 / NBRC 100887)).